Consider the following 526-residue polypeptide: Lysine--tRNA ligase (526 aa).

Positions 44-52 match the 'HIGH' region motif; the sequence is PSGLPHIGT. The 'KMSKS' region signature appears at 290–294; sequence KISKS. K293 lines the ATP pocket.

Belongs to the class-I aminoacyl-tRNA synthetase family.

It localises to the cytoplasm. It carries out the reaction tRNA(Lys) + L-lysine + ATP = L-lysyl-tRNA(Lys) + AMP + diphosphate. This is Lysine--tRNA ligase from Rickettsia typhi (strain ATCC VR-144 / Wilmington).